Reading from the N-terminus, the 35-residue chain is KSSAEVQQTQQASIPASQKANLGNQNNIMXVAXYQ.

The span at 1-28 (KSSAEVQQTQQASIPASQKANLGNQNNI) shows a compositional bias: polar residues. The tract at residues 1 to 35 (KSSAEVQQTQQASIPASQKANLGNQNNIMXVAXYQ) is disordered.

In terms of biological role, highly cationic enzyme that can bind human or rat immunoglobulins as well as serum albumin, and could therefore be involved in post-infectious sequelae. The protein is 30 kDa neutral phosphatase of Staphylococcus aureus.